Here is a 405-residue protein sequence, read N- to C-terminus: Sesquiterpene synthase 16 (405 aa).

Asp155, Asp159, and Glu309 together coordinate Mg(2+). Positions 155 to 159 match the DDXXD motif motif; that stretch reads DDTYD.

This sequence belongs to the terpene synthase family. Tpsa subfamily. Requires Mg(2+) as cofactor. It depends on Mn(2+) as a cofactor.

It participates in secondary metabolite biosynthesis; terpenoid biosynthesis. In terms of biological role, sesquiterpene synthase involved in the biosynthesis of volatile compounds. No activity detected with geranyl diphosphate (GPP) and farnesyl diphosphate (FPP) as substrates. This is Sesquiterpene synthase 16 from Solanum habrochaites (Wild tomato).